The sequence spans 225 residues: Thymidylate kinase (225 aa).

Position 9–16 (9–16 (GIEGCGKT)) interacts with ATP.

This sequence belongs to the thymidylate kinase family.

The enzyme catalyses dTMP + ATP = dTDP + ADP. Its function is as follows. Phosphorylation of dTMP to form dTDP in both de novo and salvage pathways of dTTP synthesis. This is Thymidylate kinase from Geobacter sp. (strain M21).